A 537-amino-acid polypeptide reads, in one-letter code: Protein disulfide isomerase-like 1-5 (537 aa).

The signal sequence occupies residues 1–29; that stretch reads MSLIPKPISKVSTFTFILLILLSFTIIIA. The region spanning 58 to 184 is the Thioredoxin 1 domain; sequence LQEDRPEQQS…IVIWVQKKTG (127 aa). C106 functions as the Nucleophile in the catalytic mechanism. N160, N364, and N416 each carry an N-linked (GlcNAc...) asparagine glycan. The Thioredoxin 2 domain maps to 380 to 526; the sequence is LLESDPSPNS…IAVFINEELL (147 aa). Active-site nucleophile residues include C447 and C450. C447 and C450 are disulfide-bonded. Residue N530 is glycosylated (N-linked (GlcNAc...) asparagine). The Prevents secretion from ER motif lies at 534–537; it reads KDEL.

This sequence belongs to the protein disulfide isomerase family. Widely expressed.

Its subcellular location is the endoplasmic reticulum lumen. It carries out the reaction Catalyzes the rearrangement of -S-S- bonds in proteins.. Its function is as follows. Acts as a protein-folding catalyst that interacts with nascent polypeptides to catalyze the formation, isomerization, and reduction or oxidation of disulfide bonds. In Arabidopsis thaliana (Mouse-ear cress), this protein is Protein disulfide isomerase-like 1-5 (PDIL1-5).